The following is a 636-amino-acid chain: Probable potassium transport system protein Kup (636 aa).

Transmembrane regions (helical) follow at residues 22–42, 64–84, 114–134, 150–170, 182–202, 220–240, 261–281, 293–313, 351–371, 383–403, 408–428, and 433–453; these read MGLL…SPLY, ILSL…VMFI, ALMV…SMIT, FEGI…ALFL, LFGP…VHGI, FFIV…LALT, WFAL…AILL, LLAP…ATVI, IYIG…VIGF, VAVT…MLLL, PVLA…FFAA, and IVQG…LMST.

Belongs to the HAK/KUP transporter (TC 2.A.72) family.

Its subcellular location is the cell inner membrane. The enzyme catalyses K(+)(in) + H(+)(in) = K(+)(out) + H(+)(out). Transport of potassium into the cell. Likely operates as a K(+):H(+) symporter. The chain is Probable potassium transport system protein Kup from Pseudomonas entomophila (strain L48).